The sequence spans 295 residues: 4-hydroxy-tetrahydrodipicolinate synthase (295 aa).

Threonine 47 serves as a coordination point for pyruvate. Tyrosine 135 (proton donor/acceptor) is an active-site residue. Residue lysine 163 is the Schiff-base intermediate with substrate of the active site. Isoleucine 204 is a binding site for pyruvate.

This sequence belongs to the DapA family. In terms of assembly, homotetramer; dimer of dimers.

It localises to the cytoplasm. It carries out the reaction L-aspartate 4-semialdehyde + pyruvate = (2S,4S)-4-hydroxy-2,3,4,5-tetrahydrodipicolinate + H2O + H(+). The protein operates within amino-acid biosynthesis; L-lysine biosynthesis via DAP pathway; (S)-tetrahydrodipicolinate from L-aspartate: step 3/4. In terms of biological role, catalyzes the condensation of (S)-aspartate-beta-semialdehyde [(S)-ASA] and pyruvate to 4-hydroxy-tetrahydrodipicolinate (HTPA). The sequence is that of 4-hydroxy-tetrahydrodipicolinate synthase from Caldicellulosiruptor bescii (strain ATCC BAA-1888 / DSM 6725 / KCTC 15123 / Z-1320) (Anaerocellum thermophilum).